A 193-amino-acid chain; its full sequence is Ubiquitin-conjugating enzyme E2 E1 (193 aa).

The segment at 1–45 (MSDDDSRASTSSSSSSSSNQQTEKEGSTPKKKESKVSMSKNSKLL) is disordered. Serine 2 carries the N-acetylserine modification. Positions 8–18 (ASTSSSSSSSS) are enriched in low complexity. Residues 22–35 (TEKEGSTPKKKESK) show a composition bias toward basic and acidic residues. The span at 36 to 45 (VSMSKNSKLL) shows a compositional bias: polar residues. A UBC core domain is found at 47-193 (TSAKRIQKEL…ARQWTKRYAT (147 aa)). Cysteine 131 (glycyl thioester intermediate) is an active-site residue. A Glycyl lysine isopeptide (Lys-Gly) (interchain with G-Cter in ISG15) cross-link involves residue lysine 136.

The protein belongs to the ubiquitin-conjugating enzyme family. In terms of assembly, interacts with RNF14. ISGylation suppresses ubiquitin E2 enzyme activity. Post-translationally, autoubiquitinated.

The protein resides in the nucleus. The catalysed reaction is S-ubiquitinyl-[E1 ubiquitin-activating enzyme]-L-cysteine + [E2 ubiquitin-conjugating enzyme]-L-cysteine = [E1 ubiquitin-activating enzyme]-L-cysteine + S-ubiquitinyl-[E2 ubiquitin-conjugating enzyme]-L-cysteine.. It carries out the reaction S-ubiquitinyl-[E1 ubiquitin-activating enzyme]-L-cysteine + [acceptor protein]-L-lysine = [E1 ubiquitin-activating enzyme]-L-cysteine + N(6)-monoubiquitinyl-[acceptor protein]-L-lysine.. It functions in the pathway protein modification; protein ubiquitination. Functionally, accepts ubiquitin from the E1 complex and catalyzes its covalent attachment to other proteins. Catalyzes the covalent attachment of ISG15 to other proteins. Mediates the selective degradation of short-lived and abnormal proteins. In vitro also catalyzes 'Lys-48'-linked polyubiquitination. The polypeptide is Ubiquitin-conjugating enzyme E2 E1 (Ube2e1) (Mus musculus (Mouse)).